The following is a 101-amino-acid chain: Small ribosomal subunit protein uS14 (101 aa).

Belongs to the universal ribosomal protein uS14 family. In terms of assembly, part of the 30S ribosomal subunit. Contacts proteins S3 and S10.

Its function is as follows. Binds 16S rRNA, required for the assembly of 30S particles and may also be responsible for determining the conformation of the 16S rRNA at the A site. This is Small ribosomal subunit protein uS14 from Ectopseudomonas mendocina (strain ymp) (Pseudomonas mendocina).